A 219-amino-acid chain; its full sequence is ATP phosphoribosyltransferase (219 aa).

It belongs to the ATP phosphoribosyltransferase family. Short subfamily. Heteromultimer composed of HisG and HisZ subunits.

The protein localises to the cytoplasm. It catalyses the reaction 1-(5-phospho-beta-D-ribosyl)-ATP + diphosphate = 5-phospho-alpha-D-ribose 1-diphosphate + ATP. The protein operates within amino-acid biosynthesis; L-histidine biosynthesis; L-histidine from 5-phospho-alpha-D-ribose 1-diphosphate: step 1/9. Its function is as follows. Catalyzes the condensation of ATP and 5-phosphoribose 1-diphosphate to form N'-(5'-phosphoribosyl)-ATP (PR-ATP). Has a crucial role in the pathway because the rate of histidine biosynthesis seems to be controlled primarily by regulation of HisG enzymatic activity. In Syntrophotalea carbinolica (strain DSM 2380 / NBRC 103641 / GraBd1) (Pelobacter carbinolicus), this protein is ATP phosphoribosyltransferase.